We begin with the raw amino-acid sequence, 95 residues long: Integration host factor subunit beta (95 aa).

Positions 56–76 (RAPRTGRNPKTGTSVDLDGKY) are disordered.

This sequence belongs to the bacterial histone-like protein family. As to quaternary structure, heterodimer of an alpha and a beta chain.

Its function is as follows. This protein is one of the two subunits of integration host factor, a specific DNA-binding protein that functions in genetic recombination as well as in transcriptional and translational control. The chain is Integration host factor subunit beta from Shewanella sediminis (strain HAW-EB3).